The following is a 157-amino-acid chain: SsrA-binding protein (157 aa).

The protein belongs to the SmpB family.

The protein localises to the cytoplasm. Its function is as follows. Required for rescue of stalled ribosomes mediated by trans-translation. Binds to transfer-messenger RNA (tmRNA), required for stable association of tmRNA with ribosomes. tmRNA and SmpB together mimic tRNA shape, replacing the anticodon stem-loop with SmpB. tmRNA is encoded by the ssrA gene; the 2 termini fold to resemble tRNA(Ala) and it encodes a 'tag peptide', a short internal open reading frame. During trans-translation Ala-aminoacylated tmRNA acts like a tRNA, entering the A-site of stalled ribosomes, displacing the stalled mRNA. The ribosome then switches to translate the ORF on the tmRNA; the nascent peptide is terminated with the 'tag peptide' encoded by the tmRNA and targeted for degradation. The ribosome is freed to recommence translation, which seems to be the essential function of trans-translation. The polypeptide is SsrA-binding protein (Clostridium kluyveri (strain NBRC 12016)).